The sequence spans 201 residues: Recombination protein RecR (201 aa).

The C4-type zinc finger occupies 60–75 (CSRCFHFTDAEECSIC). The 96-residue stretch at 83 to 178 (GEICVVETTA…RVSRIAYGIP (96 aa)) folds into the Toprim domain.

It belongs to the RecR family.

Its function is as follows. May play a role in DNA repair. It seems to be involved in an RecBC-independent recombinational process of DNA repair. It may act with RecF and RecO. The chain is Recombination protein RecR from Syntrophobacter fumaroxidans (strain DSM 10017 / MPOB).